A 175-amino-acid polypeptide reads, in one-letter code: Crossover junction endodeoxyribonuclease RuvC (175 aa).

Active-site residues include aspartate 8, glutamate 68, and aspartate 140. The Mg(2+) site is built by aspartate 8, glutamate 68, and aspartate 140.

It belongs to the RuvC family. In terms of assembly, homodimer which binds Holliday junction (HJ) DNA. The HJ becomes 2-fold symmetrical on binding to RuvC with unstacked arms; it has a different conformation from HJ DNA in complex with RuvA. In the full resolvosome a probable DNA-RuvA(4)-RuvB(12)-RuvC(2) complex forms which resolves the HJ. It depends on Mg(2+) as a cofactor.

The protein resides in the cytoplasm. It carries out the reaction Endonucleolytic cleavage at a junction such as a reciprocal single-stranded crossover between two homologous DNA duplexes (Holliday junction).. Its function is as follows. The RuvA-RuvB-RuvC complex processes Holliday junction (HJ) DNA during genetic recombination and DNA repair. Endonuclease that resolves HJ intermediates. Cleaves cruciform DNA by making single-stranded nicks across the HJ at symmetrical positions within the homologous arms, yielding a 5'-phosphate and a 3'-hydroxyl group; requires a central core of homology in the junction. The consensus cleavage sequence is 5'-(A/T)TT(C/G)-3'. Cleavage occurs on the 3'-side of the TT dinucleotide at the point of strand exchange. HJ branch migration catalyzed by RuvA-RuvB allows RuvC to scan DNA until it finds its consensus sequence, where it cleaves and resolves the cruciform DNA. The polypeptide is Crossover junction endodeoxyribonuclease RuvC (Pseudomonas fluorescens (strain Pf0-1)).